The sequence spans 409 residues: Beta-arrestin-2 (409 aa).

Tyrosine 48 is subject to Phosphotyrosine. A hydroxyproline; by PHD2 mark is found at proline 176 and proline 181. Residues 240–409 (ADICLFSTAQ…KDDDYDDQLC (170 aa)) form an interaction with TRAF6 region. Phosphoserine is present on serine 360. The segment at 363 to 409 (PETDVPVDTNLIEFDTNYATDDDIVFEDFARLRLKGMKDDDYDDQLC) is interaction with AP2B1. At threonine 382 the chain carries Phosphothreonine. Residues 385 to 395 (DIVFEDFARLR) carry the [DE]-X(1,2)-F-X-X-[FL]-X-X-X-R motif motif.

This sequence belongs to the arrestin family. As to quaternary structure, homooligomer; the self-association is mediated by InsP6-binding. Heterooligomer with ARRB1; the association is mediated by InsP6-binding. Interacts with ADRB2 and CHRM2. Interacts with PDE4A. Interacts with PDE4D. Interacts with MAPK10, MAPK1 and MAPK3. Interacts with DRD2. Interacts with FSHR. Interacts with CLTC. Interacts with HTR2C. Interacts with CCR5. Interacts with CXCR4. Interacts with SRC. Interacts with DUSP16; the interaction is interrupted by stimulation of AGTR1 and activation of MAPK10. Interacts with CHUK; the interaction is enhanced stimulation of ADRB2. Interacts with RELA. Interacts with MDM2; the interaction is enhanced by activation of GPCRs. Interacts with SLC9A5. Interacts with TRAF6. Interacts with IGF1R. Interacts with ENG. Interacts with KIR2DL1, KIR2DL3 and KIR2DL4. Interacts with LDLR. Interacts with AP2B1. Interacts with C5AR1. Interacts with RAF1. Interacts with MAP2K1. Interacts with MAPK1. Interacts with MAPK10; the interaction enhances MAPK10 activation by MAP3K5. Interacts with MAP2K4; the interaction is enhanced by presence of MAP3K5 and MAPK10. Interacts with MAP3K5. Interacts with AKT1. Interacts with IKBKB and MAP3K14. Interacts with SMO (activated). Interacts with GSK3A and GSK3B. Associates with protein phosphatase 2A (PP2A). Interacts with DHX8; the interaction is detected in the nucleus upon OR1D2 stimulation. Interacts with GAPDHS; the interaction is detected in the nucleus upon OR1D2 stimulation. Interacts with H2AFX; the interaction is detected in the nucleus upon OR1D2 stimulation. Interacts with KIF14; the interaction is detected in the nucleus upon OR1D2 stimulation. Interacts with RCC1; the interaction is detected in the nucleus upon OR1D2 stimulation. Interacts with CXCR4; the interaction is dependent on C-terminal phosphorylation of CXCR4 and allows activation of MAPK1 and MAPK3. Interacts with GPR143. Interacts with HCK and CXCR1 (phosphorylated). Interacts with ACKR3 and ACKR4. Interacts with ARRDC1; the interaction is direct. Interacts with GPR61, GPR62 and GPR135. Interacts (via NACHT and LRR domains) with NLRP3; this interaction is direct and inducible by omega-3 polyunsaturated fatty acids (PUFAs). Interacts with FFAR4 (via C-terminus); this interaction is stimulated by long-chain fatty acids (LCFAs). Interacts with GPR35. Interacts with GPR84. Interacts with TIGIT; this interaction inhibits the NF-kappa-B pathway. Interacts with TGFBR3. In terms of processing, phosphorylated at Thr-382 in the cytoplasm; probably dephosphorylated at the plasma membrane. The phosphorylation does not regulate internalization and recycling of ADRB2, interaction with clathrin or AP2B1. The ubiquitination status appears to regulate the formation and trafficking of beta-arrestin-GPCR complexes and signaling. Ubiquitination appears to occur GPCR-specific. Ubiquitinated by MDM2; the ubiquitination is required for rapid internalization of ADRB2. Deubiquitinated by USP33; the deubiquitination leads to a dissociation of the beta-arrestin-GPCR complex. Stimulation of a class A GPCR, such as ADRB2, induces transient ubiquitination and subsequently promotes association with USP33. Stimulation of a class B GPCR promotes a sustained ubiquitination. Deubiquitinated by USP20; allowing USP20 to deubiquitinate TRAF6 leading to inhibition of NF-kappa-B signaling. Post-translationally, hydroxylation by PHD2 modulates the rate of internalization by slowing down recruitment to the plasma membrane and inhibiting subsequent co-internalization with class A receptors.

The protein localises to the cytoplasm. It is found in the nucleus. Its subcellular location is the cell membrane. It localises to the membrane. The protein resides in the clathrin-coated pit. The protein localises to the cytoplasmic vesicle. Functions in regulating agonist-mediated G-protein coupled receptor (GPCR) signaling by mediating both receptor desensitization and resensitization processes. During homologous desensitization, beta-arrestins bind to the GPRK-phosphorylated receptor and sterically preclude its coupling to the cognate G-protein; the binding appears to require additional receptor determinants exposed only in the active receptor conformation. The beta-arrestins target many receptors for internalization by acting as endocytic adapters (CLASPs, clathrin-associated sorting proteins) and recruiting the GPRCs to the adapter protein 2 complex 2 (AP-2) in clathrin-coated pits (CCPs). However, the extent of beta-arrestin involvement appears to vary significantly depending on the receptor, agonist and cell type. Internalized arrestin-receptor complexes traffic to intracellular endosomes, where they remain uncoupled from G-proteins. Two different modes of arrestin-mediated internalization occur. Class A receptors, like ADRB2, OPRM1, ENDRA, D1AR and ADRA1B dissociate from beta-arrestin at or near the plasma membrane and undergo rapid recycling. Class B receptors, like AVPR2, AGTR1, NTSR1, TRHR and TACR1 internalize as a complex with arrestin and traffic with it to endosomal vesicles, presumably as desensitized receptors, for extended periods of time. Receptor resensitization then requires that receptor-bound arrestin is removed so that the receptor can be dephosphorylated and returned to the plasma membrane. Mediates endocytosis of CCR7 following ligation of CCL19 but not CCL21. Involved in internalization of P2RY1, P2RY4, P2RY6 and P2RY11 and ATP-stimulated internalization of P2RY2. Involved in phosphorylation-dependent internalization of OPRD1 and subsequent recycling or degradation. Involved in ubiquitination of IGF1R. Beta-arrestins function as multivalent adapter proteins that can switch the GPCR from a G-protein signaling mode that transmits short-lived signals from the plasma membrane via small molecule second messengers and ion channels to a beta-arrestin signaling mode that transmits a distinct set of signals that are initiated as the receptor internalizes and transits the intracellular compartment. Acts as a signaling scaffold for MAPK pathways such as MAPK1/3 (ERK1/2) and MAPK10 (JNK3). ERK1/2 and JNK3 activated by the beta-arrestin scaffold are largely excluded from the nucleus and confined to cytoplasmic locations such as endocytic vesicles, also called beta-arrestin signalosomes. Acts as a signaling scaffold for the AKT1 pathway. GPCRs for which the beta-arrestin-mediated signaling relies on both ARRB1 and ARRB2 (codependent regulation) include ADRB2, F2RL1 and PTH1R. For some GPCRs the beta-arrestin-mediated signaling relies on either ARRB1 or ARRB2 and is inhibited by the other respective beta-arrestin form (reciprocal regulation). Increases ERK1/2 signaling in AGTR1- and AVPR2-mediated activation (reciprocal regulation). Involved in CCR7-mediated ERK1/2 signaling involving ligand CCL19. Is involved in type-1A angiotensin II receptor/AGTR1-mediated ERK activity. Is involved in type-1A angiotensin II receptor/AGTR1-mediated MAPK10 activity. Is involved in dopamine-stimulated AKT1 activity in the striatum by disrupting the association of AKT1 with its negative regulator PP2A. Involved in AGTR1-mediated chemotaxis. Appears to function as signaling scaffold involved in regulation of MIP-1-beta-stimulated CCR5-dependent chemotaxis. Involved in attenuation of NF-kappa-B-dependent transcription in response to GPCR or cytokine stimulation by interacting with and stabilizing CHUK. Suppresses UV-induced NF-kappa-B-dependent activation by interacting with CHUK. The function is promoted by stimulation of ADRB2 and dephosphorylation of ARRB2. Involved in p53/TP53-mediated apoptosis by regulating MDM2 and reducing the MDM2-mediated degradation of p53/TP53. May serve as nuclear messenger for GPCRs. Upon stimulation of OR1D2, may be involved in regulation of gene expression during the early processes of fertilization. Also involved in regulation of receptors other than GPCRs. Involved in endocytosis of TGFBR2 and TGFBR3 and down-regulates TGF-beta signaling such as NF-kappa-B activation. Involved in endocytosis of low-density lipoprotein receptor/LDLR. Involved in endocytosis of smoothened homolog/Smo, which also requires GRK2. Involved in endocytosis of SLC9A5. Involved in endocytosis of ENG and subsequent TGF-beta-mediated ERK activation and migration of epithelial cells. Involved in Toll-like receptor and IL-1 receptor signaling through the interaction with TRAF6 which prevents TRAF6 autoubiquitination and oligomerization required for activation of NF-kappa-B and JUN. Involved in insulin resistance by acting as insulin-induced signaling scaffold for SRC, AKT1 and INSR. Involved in regulation of inhibitory signaling of natural killer cells by recruiting PTPN6 and PTPN11 to KIR2DL1. Involved in IL8-mediated granule release in neutrophils. Involved in the internalization of the atypical chemokine receptor ACKR3. Acts as an adapter protein coupling FFAR4 receptor to specific downstream signaling pathways, as well as mediating receptor endocytosis. During the activation step of NLRP3 inflammasome, directly associates with NLRP3 leading to inhibition of pro-inflammatory cytokine release and inhibition of inflammation. The protein is Beta-arrestin-2 (ARRB2) of Homo sapiens (Human).